The primary structure comprises 331 residues: MLSAAVLGQPTRDNALWVTADSGKGQTRLLLDCGGHTLDTLPLHEVQATDHLLFSHLHMDHIAGFDDFFRVNFDRQSRENHLWGPPGAARILAHRLQGYWWNHAPQLRATWRIHEVDDAAVHTWRFELHEAFEIAHDEGRTPRTGPLIETPHLRVDAVPLQHQGPCLGYVLREPGRVNVDPAGLTRLDLTPGPWLAALKAGAEEVEIAGERRPAAPLRAELLREEAGDSLAYLTDFLLDEAELARLAPLLAGVRTLYLEAQYAPADADLAARNHHTTTEQGATLAARAGAQELVLLHLSRRYREADWREMLRAAQAIFPAARFAESWLRGT.

The Zn(2+) site is built by His56, His58, Asp60, His61, His162, Asp235, and His297. Catalysis depends on Asp60, which acts as the Proton acceptor.

Belongs to the RNase Z family. Homodimer. It depends on Zn(2+) as a cofactor.

It carries out the reaction Endonucleolytic cleavage of RNA, removing extra 3' nucleotides from tRNA precursor, generating 3' termini of tRNAs. A 3'-hydroxy group is left at the tRNA terminus and a 5'-phosphoryl group is left at the trailer molecule.. Functionally, zinc phosphodiesterase, which displays some tRNA 3'-processing endonuclease activity. Probably involved in tRNA maturation, by removing a 3'-trailer from precursor tRNA. The sequence is that of Ribonuclease Z (rnz) from Deinococcus radiodurans (strain ATCC 13939 / DSM 20539 / JCM 16871 / CCUG 27074 / LMG 4051 / NBRC 15346 / NCIMB 9279 / VKM B-1422 / R1).